The sequence spans 391 residues: Methylthioribose-1-phosphate isomerase (391 aa).

Aspartate 267 acts as the Proton donor in catalysis.

This sequence belongs to the eIF-2B alpha/beta/delta subunits family. MtnA subfamily.

It localises to the cytoplasm. The protein localises to the nucleus. It carries out the reaction 5-(methylsulfanyl)-alpha-D-ribose 1-phosphate = 5-(methylsulfanyl)-D-ribulose 1-phosphate. It functions in the pathway amino-acid biosynthesis; L-methionine biosynthesis via salvage pathway; L-methionine from S-methyl-5-thio-alpha-D-ribose 1-phosphate: step 1/6. Catalyzes the interconversion of methylthioribose-1-phosphate (MTR-1-P) into methylthioribulose-1-phosphate (MTRu-1-P). This is Methylthioribose-1-phosphate isomerase from Ajellomyces capsulatus (strain NAm1 / WU24) (Darling's disease fungus).